The sequence spans 322 residues: MPGNSRRRGAVRKSGTKKGAGVGSGGQRRRGLEGRGPTPPAHLRPHHPAAKRARAQPRRPVKRADETETVLGRNPVLECLRAGVPATALYVALGTEADERLTECVARAADSGIAIVELLRADLDRMTANHLHQGIALQVPPYNYAHPDDLLAAALDQPPALLVALDNLSDPRNLGAIVRSVAAFGGHGVLIPQRRSASVTAVAWRTSAGAAARIPVARATNLTRTLKGWADRGVRVIGLDAGGGTALDDVDGTDSLVVVVGSEGKGLSRLVRQNCDEVVSIPMAAQAESLNASVAAGVVLAEIARQRRRPREPREQTQNRMI.

Basic residues-rich tracts occupy residues 1-16 (MPGN…KSGT) and 43-61 (LRPH…RRPV). The interval 1–69 (MPGNSRRRGA…PVKRADETET (69 aa)) is disordered. 3 residues coordinate S-adenosyl-L-methionine: Gly-261, Ile-281, and Leu-290.

It belongs to the class IV-like SAM-binding methyltransferase superfamily. RNA methyltransferase TrmH family.

This is an uncharacterized protein from Mycobacterium tuberculosis (strain CDC 1551 / Oshkosh).